Reading from the N-terminus, the 547-residue chain is Chaperonin GroEL (547 aa).

Residues 30-33 (TLGP), Lys-51, 87-91 (DGTTT), Gly-415, and Asp-496 contribute to the ATP site. Residues 528–547 (KEGAAPAGGMPDMGGMGGMM) are disordered. The span at 538-547 (PDMGGMGGMM) shows a compositional bias: gly residues.

It belongs to the chaperonin (HSP60) family. As to quaternary structure, forms a cylinder of 14 subunits composed of two heptameric rings stacked back-to-back. Interacts with the co-chaperonin GroES.

It localises to the cytoplasm. It catalyses the reaction ATP + H2O + a folded polypeptide = ADP + phosphate + an unfolded polypeptide.. Functionally, together with its co-chaperonin GroES, plays an essential role in assisting protein folding. The GroEL-GroES system forms a nano-cage that allows encapsulation of the non-native substrate proteins and provides a physical environment optimized to promote and accelerate protein folding. In Ruegeria sp. (strain TM1040) (Silicibacter sp.), this protein is Chaperonin GroEL.